Consider the following 264-residue polypeptide: AA9 family lytic polysaccharide monooxygenase A (264 aa).

An N-terminal signal peptide occupies residues 1-18 (MHFAALAILSSLVASAAA). Residue H19 participates in Cu(2+) binding. 2 N-linked (GlcNAc...) asparagine glycosylation sites follow: N51 and N75. An intrachain disulfide couples C59 to C182. Cu(2+) is bound at residue H96. A glycan (N-linked (GlcNAc...) asparagine) is linked at N110. H162 contributes to the O2 binding site. Y179 contributes to the Cu(2+) binding site. N-linked (GlcNAc...) asparagine glycans are attached at residues N218 and N251.

It belongs to the polysaccharide monooxygenase AA9 family. The cofactor is Cu(2+).

It localises to the secreted. It carries out the reaction [(1-&gt;4)-beta-D-glucosyl]n+m + reduced acceptor + O2 = 4-dehydro-beta-D-glucosyl-[(1-&gt;4)-beta-D-glucosyl]n-1 + [(1-&gt;4)-beta-D-glucosyl]m + acceptor + H2O.. Lytic polysaccharide monooxygenase (LPMO) that depolymerizes crystalline and amorphous polysaccharides via the oxidation of scissile alpha- or beta-(1-4)-glycosidic bonds, yielding C4 oxidation products. Catalysis by LPMOs requires the reduction of the active-site copper from Cu(II) to Cu(I) by a reducing agent and H(2)O(2) or O(2) as a cosubstrate. Active on cellulose and cello-oligosaccharides, as well as plant cell wall-derived hemicellulosic polysaccharides. Also active on cello-oligosaccharides such as cellohexaose, cellopentaose or cellotetraose. In Phanerochaete carnosa (strain HHB-10118-sp) (White-rot fungus), this protein is AA9 family lytic polysaccharide monooxygenase A.